The primary structure comprises 616 residues: Dihydroxy-acid dehydratase (616 aa).

Residue Asp81 coordinates Mg(2+). Cys122 contacts [2Fe-2S] cluster. Residues Asp123 and Lys124 each coordinate Mg(2+). Lys124 bears the N6-carboxylysine mark. Cys195 contacts [2Fe-2S] cluster. Glu491 lines the Mg(2+) pocket. The active-site Proton acceptor is Ser517.

This sequence belongs to the IlvD/Edd family. Homodimer. The cofactor is [2Fe-2S] cluster. It depends on Mg(2+) as a cofactor.

The catalysed reaction is (2R)-2,3-dihydroxy-3-methylbutanoate = 3-methyl-2-oxobutanoate + H2O. It catalyses the reaction (2R,3R)-2,3-dihydroxy-3-methylpentanoate = (S)-3-methyl-2-oxopentanoate + H2O. The protein operates within amino-acid biosynthesis; L-isoleucine biosynthesis; L-isoleucine from 2-oxobutanoate: step 3/4. It participates in amino-acid biosynthesis; L-valine biosynthesis; L-valine from pyruvate: step 3/4. Its function is as follows. Functions in the biosynthesis of branched-chain amino acids. Catalyzes the dehydration of (2R,3R)-2,3-dihydroxy-3-methylpentanoate (2,3-dihydroxy-3-methylvalerate) into 2-oxo-3-methylpentanoate (2-oxo-3-methylvalerate) and of (2R)-2,3-dihydroxy-3-methylbutanoate (2,3-dihydroxyisovalerate) into 2-oxo-3-methylbutanoate (2-oxoisovalerate), the penultimate precursor to L-isoleucine and L-valine, respectively. The protein is Dihydroxy-acid dehydratase of Salmonella agona (strain SL483).